Here is a 954-residue protein sequence, read N- to C-terminus: Lysine-specific demethylase JMJ14 (954 aa).

The interval M1–S46 is disordered. Positions E29–K38 are enriched in polar residues. One can recognise a JmjN domain in the interval A56–P97. Residues R136–K143 carry the Nuclear localization signal 1 motif. Residues R148–G170 are disordered. Residues Q263 to S429 enclose the JmjC domain. Fe cation-binding residues include H309, E311, and H397. A Nuclear localization signal 2 motif is present at residues W470 to D477. Residues C519, C522, C533, C535, C542, H545, C550, and C552 each contribute to the Zn(2+) site. The C5HC2 zinc finger occupies C519–L571. Positions S641 to I670 are disordered. The segment covering V645–I670 has biased composition (basic and acidic residues). Positions A726–A784 constitute an FYR N-terminal domain. In terms of domain architecture, FYR C-terminal spans L786–K876. The interval E884–D905 is disordered. The segment covering P885 to D905 has biased composition (basic and acidic residues).

It belongs to the JARID1 histone demethylase family. Interacts with NAC050 and NAC051/NAC052. Interacts with THAL in the nucleus. The cofactor is Fe(2+). As to expression, expressed in shoot apex, primary root tip, trichomes of young leaves, leaf vascular tissues, anther filaments and styles. Detected in inflorescences, leaves, stems, roots and siliques. Mostly expressed in floral organs, and, at low levels, in other organs.

The protein localises to the nucleus. Its subcellular location is the nucleoplasm. The catalysed reaction is N(6),N(6),N(6)-trimethyl-L-lysyl(4)-[histone H3] + 2-oxoglutarate + O2 = N(6),N(6)-dimethyl-L-lysyl(4)-[histone H3] + formaldehyde + succinate + CO2. It catalyses the reaction N(6),N(6)-dimethyl-L-lysyl(4)-[histone H3] + 2-oxoglutarate + O2 = N(6)-methyl-L-lysyl(4)-[histone H3] + formaldehyde + succinate + CO2. It carries out the reaction N(6)-methyl-L-lysyl(4)-[histone H3] + 2-oxoglutarate + O2 = L-lysyl(4)-[histone H3] + formaldehyde + succinate + CO2. The enzyme catalyses N(6),N(6),N(6)-trimethyl-L-lysyl(4)-[histone H3] + 3 2-oxoglutarate + 3 O2 = L-lysyl(4)-[histone H3] + 3 formaldehyde + 3 succinate + 3 CO2. In terms of biological role, transcriptional repressor. Histone demethylase that demethylates 'Lys-4' (H3K4me) of histone H3 with a higher activity for H3K4me3 and H3K4me2 than H3K4me1. No activity on H3K9me3/2, H3K36me3/2 and H3K27me3/2. Function as a nocturne 'eraser' to counteract the diurnal 'writer' methylase activity of ATXR3/SDG2 thus orchestrating the circadian rhythm of histone modifications (e.g. H3K4me3) and modulating the rhythmic expression of diurnal target genes; this mechanism also relies on the circadian clock oscillators CCA1 and LHY. Involved in a negative regulation of root meristem growth upon suboptimal root growth conditions. Represses FT and TSF expression to inhibit the floral transition. Binds around the transcription start site of the FT locus. Involved in the DRM2-mediated maintenance of DNA methylation, but not required for the de novo DNA methylation. Required for demethylating histone H3K4me3 at the target of RNA silencing. Counteracts the DNA methylation of expressed transgenes; specific attenuation of transgene DNA methylation enhances the production of aberrant RNAs (e.g. uncapped and antisense) that readily induce systemic RDR6-dependent post-transcriptional transgene silencing (PTGS) spreading. Together with NAC051/NAC052 and NAC050, regulates gene expression and flowering time, probably by the promotion of RNA-mediated gene silencing. Together with JMJ16 and JMJ17, required for plant growth and development. Promotes local and systemic immunity (especially toward the bacterial pathogen Pseudomonas syringae Pst DC3000 avrRpt2) by regulating positively pathogen-induced H3K4me3 enrichment and expression of defense genes involved in salicylic acid (SA)- and pipecolic acid (Pip)-mediated defense pathways (e.g. PR1, FMO1, ALD1 and SARD4). This chain is Lysine-specific demethylase JMJ14, found in Arabidopsis thaliana (Mouse-ear cress).